The following is a 413-amino-acid chain: Ribulose bisphosphate carboxylase large chain (413 aa).

Residues Asn100 and Thr150 each contribute to the substrate site. The active-site Proton acceptor is the Lys152. Lys154 serves as a coordination point for substrate. Positions 178, 180, and 181 each coordinate Mg(2+). An N6-carboxylysine modification is found at Lys178. His271 (proton acceptor) is an active-site residue. The substrate site is built by Arg272, His304, and Ser356.

The protein belongs to the RuBisCO large chain family. Type I subfamily. Heterohexadecamer of 8 large chains and 8 small chains; disulfide-linked. The disulfide link is formed within the large subunit homodimers. Mg(2+) is required as a cofactor. Post-translationally, the disulfide bond which can form in the large chain dimeric partners within the hexadecamer appears to be associated with oxidative stress and protein turnover.

The protein localises to the plastid. It is found in the chloroplast. It carries out the reaction 2 (2R)-3-phosphoglycerate + 2 H(+) = D-ribulose 1,5-bisphosphate + CO2 + H2O. It catalyses the reaction D-ribulose 1,5-bisphosphate + O2 = 2-phosphoglycolate + (2R)-3-phosphoglycerate + 2 H(+). Functionally, ruBisCO catalyzes two reactions: the carboxylation of D-ribulose 1,5-bisphosphate, the primary event in carbon dioxide fixation, as well as the oxidative fragmentation of the pentose substrate in the photorespiration process. Both reactions occur simultaneously and in competition at the same active site. In Adiantum pedatum (Northern maidenhair fern), this protein is Ribulose bisphosphate carboxylase large chain (rbcL).